The primary structure comprises 249 residues: Aquaporin SIP2-1 (249 aa).

Helical transmembrane passes span 12–32 and 53–73; these read PWLV…GALV and VSLS…SGGA. The NPA 1 signature appears at 76–78; that stretch reads NPL. The next 4 membrane-spanning stretches (helical) occupy residues 104-124, 133-155, 176-196, and 210-230; these read AQVI…PNVG, AHHG…VTLK, IHLL…AFAW, and LVYW…VTFF. The short motif at 189–191 is the NPA 2 element; sequence NPA.

Belongs to the MIP/aquaporin (TC 1.A.8) family. SIP (TC 1.A.8.10) subfamily.

It is found in the membrane. Its function is as follows. Aquaporins facilitate the transport of water and small neutral solutes across cell membranes. The protein is Aquaporin SIP2-1 (SIP2-1) of Zea mays (Maize).